The following is a 467-amino-acid chain: ATP synthase subunit beta (467 aa).

152–159 (GGAGVGKT) lines the ATP pocket.

This sequence belongs to the ATPase alpha/beta chains family. F-type ATPases have 2 components, CF(1) - the catalytic core - and CF(0) - the membrane proton channel. CF(1) has five subunits: alpha(3), beta(3), gamma(1), delta(1), epsilon(1). CF(0) has three main subunits: a(1), b(2) and c(9-12). The alpha and beta chains form an alternating ring which encloses part of the gamma chain. CF(1) is attached to CF(0) by a central stalk formed by the gamma and epsilon chains, while a peripheral stalk is formed by the delta and b chains.

The protein resides in the cell membrane. It carries out the reaction ATP + H2O + 4 H(+)(in) = ADP + phosphate + 5 H(+)(out). Functionally, produces ATP from ADP in the presence of a proton gradient across the membrane. The catalytic sites are hosted primarily by the beta subunits. The polypeptide is ATP synthase subunit beta (Caldicellulosiruptor saccharolyticus (strain ATCC 43494 / DSM 8903 / Tp8T 6331)).